The chain runs to 398 residues: Heat-inducible transcription repressor HrcA (398 aa).

This sequence belongs to the HrcA family.

Negative regulator of class I heat shock genes (grpE-dnaK-dnaJ and groELS operons). Prevents heat-shock induction of these operons. The polypeptide is Heat-inducible transcription repressor HrcA (Chlamydia pneumoniae (Chlamydophila pneumoniae)).